Consider the following 163-residue polypeptide: Choriogonadotropin subunit beta variant 2 (163 aa).

Positions 1–18 (MSKGLLLLLLLSMGGTWA) are cleaved as a signal peptide. Cystine bridges form between C27-C75, C41-C90, C44-C128, C52-C106, C56-C108, and C111-C118. N-linked (GlcNAc...) asparagine glycosylation is found at N31 and N48. Positions 129 to 163 (DDPRFQASSSSKAPPPSLPSPSRLPGPSDTPILPQ) are disordered. Pro residues predominate over residues 141-152 (APPPSLPSPSRL).

The protein belongs to the glycoprotein hormones subunit beta family. In terms of tissue distribution, expressed in placenta, testis and pituitary.

It is found in the secreted. This chain is Choriogonadotropin subunit beta variant 2 (CGB2), found in Homo sapiens (Human).